Here is a 421-residue protein sequence, read N- to C-terminus: uncharacterized protein (421 aa).

This sequence belongs to the glycosyltransferase 28 family.

This is an uncharacterized protein from Mycobacterium leprae (strain TN).